The chain runs to 311 residues: Glutamyl-Q tRNA(Asp) synthetase (311 aa).

Residues R14 to S18 and E50 contribute to the L-glutamate site. Residues P17 to N27 carry the 'HIGH' region motif. The Zn(2+) site is built by C104, C106, Y125, and C129. L-glutamate-binding residues include Y186 and R204. The 'KMSKS' region motif lies at R242–R246. K245 serves as a coordination point for ATP.

The protein belongs to the class-I aminoacyl-tRNA synthetase family. GluQ subfamily. Zn(2+) is required as a cofactor.

Catalyzes the tRNA-independent activation of glutamate in presence of ATP and the subsequent transfer of glutamate onto a tRNA(Asp). Glutamate is transferred on the 2-amino-5-(4,5-dihydroxy-2-cyclopenten-1-yl) moiety of the queuosine in the wobble position of the QUC anticodon. The polypeptide is Glutamyl-Q tRNA(Asp) synthetase (Nocardia farcinica (strain IFM 10152)).